Here is a 174-residue protein sequence, read N- to C-terminus: MSRIGIFYGSSSGVTGKVAEKLAELLGEERCDLYNMEEDFVDFDDMLKYDHLLFGCSTWGSGEVQNDWRDPLLELDNEKPDFSGKTIALFGAGDYVSHGEQFVSALGVLYDKFKARGAALVGSFPTDGYTYEYSFAVRDGKFVGLPFDKINEVDKTDERLERWIAVLQEEFLPA.

Residues 4 to 168 (IGIFYGSSSG…RLERWIAVLQ (165 aa)) enclose the Flavodoxin-like domain. FMN is bound by residues 10 to 14 (SSSGV) and 89 to 122 (LFGAGDYVSHGEQFVSALGVLYDKFKARGAALVG).

It depends on FMN as a cofactor.

In terms of biological role, flavodoxins are low-potential electron donors to a number of redox enzymes. AvFld 1 is able to donate electrons to the assimilatory nitrate reductase of A.vinelandii to catalyze the reduction of nitrate to nitrite. The chain is Flavodoxin 1 from Azotobacter vinelandii (strain DJ / ATCC BAA-1303).